A 140-amino-acid chain; its full sequence is Putative transcription elongation factor S-II-like protein 349L (140 aa).

A TFIIS-type zinc finger spans residues 100 to 139; it reads GAIKCKCGSERVFSFSKQTRSGDESTSVFALCSSCKSKWV. Residues Cys-104, Cys-106, Cys-131, and Cys-134 each contribute to the Zn(2+) site.

The protein belongs to the IIV-6 349L family.

In Acheta domesticus (House cricket), this protein is Putative transcription elongation factor S-II-like protein 349L.